The sequence spans 161 residues: Phosphopantetheine adenylyltransferase (161 aa).

Thr10 lines the substrate pocket. Residues 10–11 (TF) and His18 each bind ATP. Positions 42, 74, and 88 each coordinate substrate. Residues 89–91 (GLR), Glu99, and 124–130 (WSFISSS) contribute to the ATP site.

It belongs to the bacterial CoaD family. Homohexamer. Mg(2+) serves as cofactor.

The protein resides in the cytoplasm. The enzyme catalyses (R)-4'-phosphopantetheine + ATP + H(+) = 3'-dephospho-CoA + diphosphate. The protein operates within cofactor biosynthesis; coenzyme A biosynthesis; CoA from (R)-pantothenate: step 4/5. Its function is as follows. Reversibly transfers an adenylyl group from ATP to 4'-phosphopantetheine, yielding dephospho-CoA (dPCoA) and pyrophosphate. The protein is Phosphopantetheine adenylyltransferase of Serratia proteamaculans (strain 568).